A 299-amino-acid chain; its full sequence is tRNA pseudouridine synthase A (299 aa).

D67 serves as the catalytic Nucleophile. Y125 is a binding site for substrate.

This sequence belongs to the tRNA pseudouridine synthase TruA family. In terms of assembly, homodimer.

The enzyme catalyses uridine(38/39/40) in tRNA = pseudouridine(38/39/40) in tRNA. Its function is as follows. Formation of pseudouridine at positions 38, 39 and 40 in the anticodon stem and loop of transfer RNAs. This is tRNA pseudouridine synthase A from Parasynechococcus marenigrum (strain WH8102).